A 187-amino-acid chain; its full sequence is MNLQHHFLIAMPALQDPIFRRSVVYICEHNQDGAMGIIVNKPLENLQIEGILEKLKITPEPRDSSIRLDKAVMLGGPLAEDRGFILHTPPSRFASSIRISDNTVITTSRDVLETLGTQQQPSDVLVALGYASWDKGQLEQELLDNAWLTAPADLNILFKTPIAERWREAAKLIGIDILTMPGVAGHA.

Belongs to the UPF0301 (AlgH) family.

In Salmonella agona (strain SL483), this protein is UPF0301 protein YqgE.